The sequence spans 280 residues: Succinate dehydrogenase [ubiquinone] iron-sulfur subunit, mitochondrial (280 aa).

The N-terminal 28 residues, 1 to 28, are a transit peptide targeting the mitochondrion; sequence MAAVVALSLRRRLPATTLGGACLQASRG. The 2Fe-2S ferredoxin-type domain occupies 40 to 133; it reads KKFAIYRWDP…VSKIYPLPHM (94 aa). N6-acetyllysine occurs at positions 51 and 55. Cys-93, Cys-98, Cys-101, and Cys-113 together coordinate [2Fe-2S] cluster. The interval 146–218 is interaction with SDHAF1; that stretch reads FYAQYKSIEP…PAVLMQAYRW (73 aa). A 4Fe-4S ferredoxin-type domain is found at 176 to 206; that stretch reads EREKLDGLYECILCACCSTSCPSYWWNGDKY. The [4Fe-4S] cluster site is built by Cys-186, Cys-189, and Cys-192. Residue Cys-196 participates in [3Fe-4S] cluster binding. Trp-201 contacts a ubiquinone. 2 residues coordinate [3Fe-4S] cluster: Cys-243 and Cys-249. Cys-253 provides a ligand contact to [4Fe-4S] cluster.

The protein belongs to the succinate dehydrogenase/fumarate reductase iron-sulfur protein family. Component of complex II composed of four subunits: the flavoprotein (FP) SDHA, iron-sulfur protein (IP) SDHB, and a cytochrome b560 composed of SDHC and SDHD. Interacts with SDHAF1; the interaction is required for iron-sulfur cluster incorporation into SDHB. As to quaternary structure, (Microbial infection) Interacts with JC virus small t antigen. [2Fe-2S] cluster is required as a cofactor. [3Fe-4S] cluster serves as cofactor. It depends on [4Fe-4S] cluster as a cofactor.

Its subcellular location is the mitochondrion inner membrane. The enzyme catalyses a quinone + succinate = fumarate + a quinol. It catalyses the reaction (R)-malate + a quinone = enol-oxaloacetate + a quinol. It carries out the reaction (S)-malate + a quinone = enol-oxaloacetate + a quinol. The protein operates within carbohydrate metabolism; tricarboxylic acid cycle; fumarate from succinate (eukaryal route): step 1/1. Its activity is regulated as follows. Enol-oxaloacetate inhibits the succinate dehydrogenase activity. In terms of biological role, iron-sulfur protein (IP) subunit of the succinate dehydrogenase complex (mitochondrial respiratory chain complex II), responsible for transferring electrons from succinate to ubiquinone (coenzyme Q). SDH also oxidizes malate to the non-canonical enol form of oxaloacetate, enol-oxaloacetate. Enol-oxaloacetate, which is a potent inhibitor of the succinate dehydrogenase activity, is further isomerized into keto-oxaloacetate. The sequence is that of Succinate dehydrogenase [ubiquinone] iron-sulfur subunit, mitochondrial (SDHB) from Homo sapiens (Human).